Reading from the N-terminus, the 372-residue chain is MKLTIERAALLKALGHVQSVVERRNTIPILSNILLSAEGDRLSFSATDLDMEIIDEGFAQIDVPGQITAPAHTLYEIVRKLPDGADVSLSFSGDDPRLVIQAGRSRFNLPVLPAGDFPVMSSDGLSSRIAVDTNELIRLIDKTRFAISTEETRYYLNGLYVHTVNEGGETKLRAVATDGHRLALAEMPAPEGAVGIPGVIVPRKTIAEARRLMESAGETVDLQVSPQKVRFEFGAAALTSKVIDGAFPDYMRVIPRDNAKILTLDNDLFAKAVDRVATISAEKSRSVKLAVEPGRITLTVRNMEAGQAVEEVEVDYDGEPFEIGFNARYLLDVCGQIAGPQAEFRFADPASPTLVVDPVDPGVKYVLMPLRV.

This sequence belongs to the beta sliding clamp family. Forms a ring-shaped head-to-tail homodimer around DNA which binds and tethers DNA polymerases and other proteins to the DNA. The DNA replisome complex has a single clamp-loading complex (3 tau and 1 each of delta, delta', psi and chi subunits) which binds 3 Pol III cores (1 core on the leading strand and 2 on the lagging strand) each with a beta sliding clamp dimer. Additional proteins in the replisome are other copies of gamma, psi and chi, Ssb, DNA helicase and RNA primase.

It is found in the cytoplasm. In terms of biological role, confers DNA tethering and processivity to DNA polymerases and other proteins. Acts as a clamp, forming a ring around DNA (a reaction catalyzed by the clamp-loading complex) which diffuses in an ATP-independent manner freely and bidirectionally along dsDNA. Initially characterized for its ability to contact the catalytic subunit of DNA polymerase III (Pol III), a complex, multichain enzyme responsible for most of the replicative synthesis in bacteria; Pol III exhibits 3'-5' exonuclease proofreading activity. The beta chain is required for initiation of replication as well as for processivity of DNA replication. In Caulobacter vibrioides (strain ATCC 19089 / CIP 103742 / CB 15) (Caulobacter crescentus), this protein is Beta sliding clamp (dnaN).